We begin with the raw amino-acid sequence, 332 residues long: Autoinducer 2 import system permease protein LsrD (332 aa).

10 consecutive transmembrane segments (helical) span residues 7–27 (YSWE…FGVI), 45–65 (ICIG…GMDI), 70–90 (TIGL…PLPL), 91–111 (AIII…GLII), 118–138 (LVIT…LSGM), 162–182 (FLGI…FWLL), 216–236 (VYAM…SYFG), 240–260 (SDLG…GGAN), 261–281 (IYGG…VGFL), and 288–308 (AGVP…VVVV).

It belongs to the binding-protein-dependent transport system permease family. AraH/RbsC subfamily. In terms of assembly, the complex is composed of two ATP-binding proteins (LsrA), two transmembrane proteins (LsrC and LsrD) and a solute-binding protein (LsrB).

It localises to the cell inner membrane. Functionally, part of the ABC transporter complex LsrABCD involved in autoinducer 2 (AI-2) import. Probably responsible for the translocation of the substrate across the membrane. This Salmonella paratyphi A (strain ATCC 9150 / SARB42) protein is Autoinducer 2 import system permease protein LsrD (lsrD).